Here is a 50-residue protein sequence, read N- to C-terminus: Defensin D4 (50 aa).

Disulfide bonds link C3–C50, C14–C35, C20–C44, and C24–C46.

As to expression, detected in seeds (at protein level).

The protein localises to the secreted. In terms of biological role, antimicrobial peptide with antifungal activity. This is Defensin D4 from Nigella sativa (Black cumin).